An 87-amino-acid chain; its full sequence is Large ribosomal subunit protein bL27 (87 aa).

The interval 1-21 (MAHKKAGGSSRNGRDSESKRL) is disordered.

Belongs to the bacterial ribosomal protein bL27 family.

The sequence is that of Large ribosomal subunit protein bL27 from Burkholderia mallei (strain NCTC 10247).